Here is a 368-residue protein sequence, read N- to C-terminus: 3-isopropylmalate dehydrogenase (368 aa).

79–91 (GPEWGTSSTVRPE) is an NAD(+) binding site. Substrate is bound by residues Arg-98, Arg-108, Arg-137, and Asp-226. Mg(2+) contacts are provided by Asp-226, Asp-251, and Asp-255. 291–303 (GSAPDISGKGIVN) is a binding site for NAD(+).

The protein belongs to the isocitrate and isopropylmalate dehydrogenases family. In terms of assembly, homodimer. It depends on Mg(2+) as a cofactor. The cofactor is Mn(2+).

The protein resides in the cytoplasm. The enzyme catalyses (2R,3S)-3-isopropylmalate + NAD(+) = 4-methyl-2-oxopentanoate + CO2 + NADH. Its pathway is amino-acid biosynthesis; L-leucine biosynthesis; L-leucine from 3-methyl-2-oxobutanoate: step 3/4. Catalyzes the oxidation of 3-carboxy-2-hydroxy-4-methylpentanoate (3-isopropylmalate) to 3-carboxy-4-methyl-2-oxopentanoate. The product decarboxylates to 4-methyl-2 oxopentanoate. This is 3-isopropylmalate dehydrogenase (leu-1) from Neurospora crassa (strain ATCC 24698 / 74-OR23-1A / CBS 708.71 / DSM 1257 / FGSC 987).